Here is an 898-residue protein sequence, read N- to C-terminus: Magnesium-transporting ATPase, P-type 1 (898 aa).

The Cytoplasmic segment spans residues 1-94; sequence MFKEIFTRLI…QPSPWWVHLW (94 aa). Residues 95 to 115 form a helical membrane-spanning segment; the sequence is VCYRNPFNILLTILGAISYAT. A topological domain (extracellular) is located at residue Glu116. The helical transmembrane segment at 117 to 137 threads the bilayer; that stretch reads DLFAAGVIALMVAISTLLNFI. Residues 138–287 lie on the Cytoplasmic side of the membrane; it reads QEARSTKAAD…PNAFQQGISR (150 aa). The helical transmembrane segment at 288 to 308 threads the bilayer; that stretch reads VSMLLIRFMLVMAPVVLLING. The Extracellular portion of the chain corresponds to 309 to 317; the sequence is YTKGDWWEA. A helical membrane pass occupies residues 318–335; it reads ALFALSVAVGLTPEMLPM. Glu331 is a binding site for Mg(2+). Residues 336–695 are Cytoplasmic-facing; it reads IVTSTLARGA…IEGRRTFANM (360 aa). Asp373 acts as the 4-aspartylphosphate intermediate in catalysis. Mg(2+) contacts are provided by Asp641, Asp645, and Asn709. Residues 696-715 traverse the membrane as a helical segment; it reads LKYIKMTASSNFGNVFSVLV. The Extracellular portion of the chain corresponds to 716 to 724; it reads ASAFLPFLP. A helical membrane pass occupies residues 725–744; sequence MLPLHLLIQNLLYDVSQVAI. 2 residues coordinate Mg(2+): Asn734 and Asp738. Residues 745 to 766 lie on the Cytoplasmic side of the membrane; it reads PFDNVDDEQIQKPQRWNPADLG. The helical transmembrane segment at 767–790 threads the bilayer; it reads RFMIFFGPISSIFDILTFCLMWWV. The Extracellular portion of the chain corresponds to 791-799; the sequence is FHANTPETQ. The chain crosses the membrane as a helical span at residues 800-818; it reads TLFQSGWFVVGLLSQTLIV. The Cytoplasmic segment spans residues 819–831; the sequence is HMIRTRRVPFIQS. The chain crosses the membrane as a helical span at residues 832-851; it reads CASWPLMIMTVIVMIVGIAL. The Extracellular segment spans residues 852-866; that stretch reads PFSPLASYLQLQALP. The helical transmembrane segment at 867–886 threads the bilayer; that stretch reads LSYFPWLVAILAGYMTLTQL. Over 887-898 the chain is Cytoplasmic; it reads VKGFYSRRYGWQ.

This sequence belongs to the cation transport ATPase (P-type) (TC 3.A.3) family. Type IIIB subfamily.

Its subcellular location is the cell inner membrane. It catalyses the reaction Mg(2+)(out) + ATP + H2O = Mg(2+)(in) + ADP + phosphate + H(+). Its function is as follows. Mediates magnesium influx to the cytosol. This Escherichia coli O157:H7 protein is Magnesium-transporting ATPase, P-type 1 (mgtA).